Reading from the N-terminus, the 459-residue chain is Ribulose bisphosphate carboxylase large chain (459 aa).

The residue at position 4 (Lys4) is an N6,N6,N6-trimethyllysine. Substrate is bound by residues Asn113 and Thr163. Lys165 (proton acceptor) is an active-site residue. Lys167 is a binding site for substrate. Lys191, Asp193, and Glu194 together coordinate Mg(2+). Lys191 carries the post-translational modification N6-carboxylysine. Catalysis depends on His284, which acts as the Proton acceptor. Substrate contacts are provided by Arg285, His317, and Ser369.

Belongs to the RuBisCO large chain family. Type I subfamily. As to quaternary structure, heterohexadecamer of 8 large chains and 8 small chains; disulfide-linked. The disulfide link is formed within the large subunit homodimers. Mg(2+) is required as a cofactor. In terms of processing, the disulfide bond which can form in the large chain dimeric partners within the hexadecamer appears to be associated with oxidative stress and protein turnover.

The protein resides in the plastid. It is found in the chloroplast. It catalyses the reaction 2 (2R)-3-phosphoglycerate + 2 H(+) = D-ribulose 1,5-bisphosphate + CO2 + H2O. The enzyme catalyses D-ribulose 1,5-bisphosphate + O2 = 2-phosphoglycolate + (2R)-3-phosphoglycerate + 2 H(+). In terms of biological role, ruBisCO catalyzes two reactions: the carboxylation of D-ribulose 1,5-bisphosphate, the primary event in carbon dioxide fixation, as well as the oxidative fragmentation of the pentose substrate in the photorespiration process. Both reactions occur simultaneously and in competition at the same active site. This Roridula gorgonias (South African fly bush) protein is Ribulose bisphosphate carboxylase large chain.